The sequence spans 293 residues: MTSSYVGRFAPTPSGYLHFGSLVAAVASYLDARAVGGRWLVRMEDLDPPREVPGAQQAILETLERYGFEWDGAVERQSERFPAYAAVVEQLLRSGLAYACTCSRKQLEGFAGIYPGFCRDAGHAREDAAIRLRVPELEYRFVDRVQGEVRQHLGREVGDFVIQRRDGFYAYQLAVVLDDAWQGITDIVRGADLLDSTPRQLYLQELLGLSQPRYLHVPLIVQPDGHKLGKSYRSPPLPAEQAAAPLTRALRALGQRPPAELAQASASEALAWGVAHWDATRIPRCATLPEERL.

Residues 8–12 (RFAPT) and E44 contribute to the L-glutamate site. The 'HIGH' region signature appears at 11 to 21 (PTPSGYLHFGS). Zn(2+) is bound by residues C100, C102, Y114, and C118. Residues Y171 and R189 each contribute to the L-glutamate site. A 'KMSKS' region motif is present at residues 227–231 (KLGKS). K230 is an ATP binding site.

Belongs to the class-I aminoacyl-tRNA synthetase family. GluQ subfamily. Requires Zn(2+) as cofactor.

Catalyzes the tRNA-independent activation of glutamate in presence of ATP and the subsequent transfer of glutamate onto a tRNA(Asp). Glutamate is transferred on the 2-amino-5-(4,5-dihydroxy-2-cyclopenten-1-yl) moiety of the queuosine in the wobble position of the QUC anticodon. The sequence is that of Glutamyl-Q tRNA(Asp) synthetase from Pseudomonas aeruginosa (strain LESB58).